We begin with the raw amino-acid sequence, 427 residues long: Probable protein phosphatase 2C 64 (427 aa).

The interval 1–36 (MGNCVARSGTAVDAGGDGGEDGKRRRRRWKAPREDQ) is disordered. The PPM-type phosphatase domain maps to 53-331 (TATVYTQQGR…DDCAVVCLYL (279 aa)). Mn(2+)-binding residues include aspartate 89, glycine 90, aspartate 276, and aspartate 322.

The protein belongs to the PP2C family. Requires Mg(2+) as cofactor. It depends on Mn(2+) as a cofactor.

The catalysed reaction is O-phospho-L-seryl-[protein] + H2O = L-seryl-[protein] + phosphate. The enzyme catalyses O-phospho-L-threonyl-[protein] + H2O = L-threonyl-[protein] + phosphate. The sequence is that of Probable protein phosphatase 2C 64 from Oryza sativa subsp. japonica (Rice).